Consider the following 139-residue polypeptide: Proline-rich protein 13 (139 aa).

The tract at residues 1 to 139 (MWNPSAGPNP…SSSSSSSDSD (139 aa)) is disordered. Pro residues-rich tracts occupy residues 24-62 (ACPP…PQPG) and 70-91 (GPYP…PPAP). Over residues 103–124 (KTRKKMKKAHKKSHKHHKHGKH) the composition is skewed to basic residues. Low complexity predominate over residues 125–139 (SSSSSSSSSSSSDSD).

The protein resides in the nucleus. Negatively regulates TSP1 expression at the level of transcription. This down-regulation was shown to reduce taxane-induced apoptosis. The sequence is that of Proline-rich protein 13 (Prr13) from Rattus norvegicus (Rat).